We begin with the raw amino-acid sequence, 526 residues long: Lysine--tRNA ligase (526 aa).

Residues Glu-431 and Glu-438 each contribute to the Mg(2+) site.

This sequence belongs to the class-II aminoacyl-tRNA synthetase family. As to quaternary structure, homodimer. The cofactor is Mg(2+).

Its subcellular location is the cytoplasm. It carries out the reaction tRNA(Lys) + L-lysine + ATP = L-lysyl-tRNA(Lys) + AMP + diphosphate. The chain is Lysine--tRNA ligase from Chlamydia felis (strain Fe/C-56) (Chlamydophila felis).